The chain runs to 176 residues: NAD(P)H-quinone oxidoreductase subunit 6, chloroplastic (176 aa).

A run of 5 helical transmembrane segments spans residues 10–30 (FLLVFLGLGLILGGLGVVLLT), 32–52 (PIYSAFSLGLVLVCISLFYIL), 61–81 (AQLLIYVGAINVLIIFAVMFM), 95–115 (VGSGVTSLVCTSIFVSLITII), and 152–172 (FFLPFEFISIILLVALIGAIA).

It belongs to the complex I subunit 6 family. In terms of assembly, NDH is composed of at least 16 different subunits, 5 of which are encoded in the nucleus.

The protein resides in the plastid. It is found in the chloroplast thylakoid membrane. The enzyme catalyses a plastoquinone + NADH + (n+1) H(+)(in) = a plastoquinol + NAD(+) + n H(+)(out). It catalyses the reaction a plastoquinone + NADPH + (n+1) H(+)(in) = a plastoquinol + NADP(+) + n H(+)(out). Its function is as follows. NDH shuttles electrons from NAD(P)H:plastoquinone, via FMN and iron-sulfur (Fe-S) centers, to quinones in the photosynthetic chain and possibly in a chloroplast respiratory chain. The immediate electron acceptor for the enzyme in this species is believed to be plastoquinone. Couples the redox reaction to proton translocation, and thus conserves the redox energy in a proton gradient. In Manihot esculenta (Cassava), this protein is NAD(P)H-quinone oxidoreductase subunit 6, chloroplastic (ndhG).